The primary structure comprises 245 residues: 1-(5-phosphoribosyl)-5-[(5-phosphoribosylamino)methylideneamino] imidazole-4-carboxamide isomerase (245 aa).

The active-site Proton acceptor is D7. Residue D129 is the Proton donor of the active site.

This sequence belongs to the HisA/HisF family.

It is found in the cytoplasm. The catalysed reaction is 1-(5-phospho-beta-D-ribosyl)-5-[(5-phospho-beta-D-ribosylamino)methylideneamino]imidazole-4-carboxamide = 5-[(5-phospho-1-deoxy-D-ribulos-1-ylimino)methylamino]-1-(5-phospho-beta-D-ribosyl)imidazole-4-carboxamide. Its pathway is amino-acid biosynthesis; L-histidine biosynthesis; L-histidine from 5-phospho-alpha-D-ribose 1-diphosphate: step 4/9. The protein is 1-(5-phosphoribosyl)-5-[(5-phosphoribosylamino)methylideneamino] imidazole-4-carboxamide isomerase of Shewanella baltica (strain OS155 / ATCC BAA-1091).